The following is a 268-amino-acid chain: Zinc transporter ZupT (268 aa).

The next 8 membrane-spanning stretches (helical) occupy residues 5-25 (ILFA…GSII), 38-58 (TVSL…EIFV), 72-92 (AGYI…ALID), 124-144 (MGLF…LATF), 152-172 (TLGI…GLAV), 187-207 (FVLS…GFFL), 211-231 (LFTE…MVYI), and 248-268 (LAIG…LLFL). 2 residues coordinate Fe(2+): asparagine 136 and glutamate 139. The Zn(2+) site is built by glutamate 139 and histidine 164. Fe(2+) is bound by residues asparagine 165, glutamate 168, and glutamate 197. Position 168 (glutamate 168) interacts with Zn(2+).

This sequence belongs to the ZIP transporter (TC 2.A.5) family. ZupT subfamily.

Its subcellular location is the cell inner membrane. It catalyses the reaction Zn(2+)(in) = Zn(2+)(out). Its function is as follows. Mediates zinc uptake. May also transport other divalent cations. This Chlorobaculum parvum (strain DSM 263 / NCIMB 8327) (Chlorobium vibrioforme subsp. thiosulfatophilum) protein is Zinc transporter ZupT.